Reading from the N-terminus, the 254-residue chain is RNA polymerase sigma factor SigI8 (254 aa).

Positions 61–74 (DEYSIALIAFNEAI) match the Polymerase core binding motif. Positions 209–228 (YKELTERFNLCRRTLEKNRK) form a DNA-binding region, H-T-H motif.

This sequence belongs to the sigma-70 factor family. SigI subfamily. In terms of assembly, interacts with RsgI8.

It is found in the cytoplasm. Its activity is regulated as follows. Negatively regulated by the anti-sigma-I factor RsgI8. Its function is as follows. Sigma factors are initiation factors that promote the attachment of RNA polymerase to specific initiation sites and are then released. The protein is RNA polymerase sigma factor SigI8 of Acetivibrio thermocellus (strain ATCC 27405 / DSM 1237 / JCM 9322 / NBRC 103400 / NCIMB 10682 / NRRL B-4536 / VPI 7372) (Clostridium thermocellum).